The sequence spans 83 residues: Sulfur carrier protein TusA (83 aa).

C20 functions as the Cysteine persulfide intermediate in the catalytic mechanism.

Belongs to the sulfur carrier protein TusA family.

The protein localises to the cytoplasm. In terms of biological role, sulfur carrier protein which probably makes part of a sulfur-relay system. In Pseudoalteromonas atlantica (strain T6c / ATCC BAA-1087), this protein is Sulfur carrier protein TusA.